Consider the following 314-residue polypeptide: 3'-5' exoribonuclease YhaM (314 aa).

Residues 14-90 (VDLYLLIKSS…QLKLRNIRPA (77 aa)) constitute a DNA-binding region (OB). In terms of domain architecture, HD spans 163–279 (HVVSMLNLAK…LHYIDNLDAK (117 aa)).

This sequence belongs to the YhaM family.

Shows a 3'-5' exoribonuclease activity. This chain is 3'-5' exoribonuclease YhaM, found in Bacillus licheniformis (strain ATCC 14580 / DSM 13 / JCM 2505 / CCUG 7422 / NBRC 12200 / NCIMB 9375 / NCTC 10341 / NRRL NRS-1264 / Gibson 46).